The sequence spans 335 residues: Dihydroorotate dehydrogenase (quinone) (335 aa).

FMN-binding positions include 58–62 (AGADK) and threonine 82. Lysine 62 lines the substrate pocket. Residue 107–111 (NRNGF) participates in substrate binding. Asparagine 135 and asparagine 168 together coordinate FMN. A substrate-binding site is contributed by asparagine 168. Serine 171 (nucleophile) is an active-site residue. A substrate-binding site is contributed by asparagine 173. Residues lysine 213 and glycine 241 each contribute to the FMN site. Position 242-243 (242-243 (NT)) interacts with substrate. Residues glycine 264, glycine 293, and 314-315 (YS) each bind FMN.

It belongs to the dihydroorotate dehydrogenase family. Type 2 subfamily. In terms of assembly, monomer. FMN serves as cofactor.

The protein resides in the cell membrane. It carries out the reaction (S)-dihydroorotate + a quinone = orotate + a quinol. The protein operates within pyrimidine metabolism; UMP biosynthesis via de novo pathway; orotate from (S)-dihydroorotate (quinone route): step 1/1. In terms of biological role, catalyzes the conversion of dihydroorotate to orotate with quinone as electron acceptor. The sequence is that of Dihydroorotate dehydrogenase (quinone) from Actinobacillus pleuropneumoniae serotype 3 (strain JL03).